The chain runs to 67 residues: UPF0434 protein Reut_A0592 (67 aa).

It belongs to the UPF0434 family.

In Cupriavidus pinatubonensis (strain JMP 134 / LMG 1197) (Cupriavidus necator (strain JMP 134)), this protein is UPF0434 protein Reut_A0592.